Reading from the N-terminus, the 335-residue chain is Holliday junction branch migration complex subunit RuvB (335 aa).

A large ATPase domain (RuvB-L) region spans residues 1–183 (MDERIISSET…FGVIDHLEFY (183 aa)). ATP is bound by residues L22, R23, G64, K67, T68, T69, 130 to 132 (EDY), R173, Y183, and R220. Mg(2+) is bound at residue T68. The segment at 184 to 254 (TEEQLTEIVL…LAKEALTLLQ (71 aa)) is small ATPAse domain (RuvB-S). Residues 257–335 (PRGLDTIDQK…HLGISYEKEV (79 aa)) form a head domain (RuvB-H) region. DNA contacts are provided by R293, R312, and R317.

It belongs to the RuvB family. In terms of assembly, homohexamer. Forms an RuvA(8)-RuvB(12)-Holliday junction (HJ) complex. HJ DNA is sandwiched between 2 RuvA tetramers; dsDNA enters through RuvA and exits via RuvB. An RuvB hexamer assembles on each DNA strand where it exits the tetramer. Each RuvB hexamer is contacted by two RuvA subunits (via domain III) on 2 adjacent RuvB subunits; this complex drives branch migration. In the full resolvosome a probable DNA-RuvA(4)-RuvB(12)-RuvC(2) complex forms which resolves the HJ.

The protein localises to the cytoplasm. It carries out the reaction ATP + H2O = ADP + phosphate + H(+). In terms of biological role, the RuvA-RuvB-RuvC complex processes Holliday junction (HJ) DNA during genetic recombination and DNA repair, while the RuvA-RuvB complex plays an important role in the rescue of blocked DNA replication forks via replication fork reversal (RFR). RuvA specifically binds to HJ cruciform DNA, conferring on it an open structure. The RuvB hexamer acts as an ATP-dependent pump, pulling dsDNA into and through the RuvAB complex. RuvB forms 2 homohexamers on either side of HJ DNA bound by 1 or 2 RuvA tetramers; 4 subunits per hexamer contact DNA at a time. Coordinated motions by a converter formed by DNA-disengaged RuvB subunits stimulates ATP hydrolysis and nucleotide exchange. Immobilization of the converter enables RuvB to convert the ATP-contained energy into a lever motion, pulling 2 nucleotides of DNA out of the RuvA tetramer per ATP hydrolyzed, thus driving DNA branch migration. The RuvB motors rotate together with the DNA substrate, which together with the progressing nucleotide cycle form the mechanistic basis for DNA recombination by continuous HJ branch migration. Branch migration allows RuvC to scan DNA until it finds its consensus sequence, where it cleaves and resolves cruciform DNA. The chain is Holliday junction branch migration complex subunit RuvB from Listeria welshimeri serovar 6b (strain ATCC 35897 / DSM 20650 / CCUG 15529 / CIP 8149 / NCTC 11857 / SLCC 5334 / V8).